The following is a 296-amino-acid chain: Protoheme IX farnesyltransferase (296 aa).

Helical transmembrane passes span 9–29 (VTKP…FLLA), 36–56 (YPLF…GCVF), 84–104 (AVSL…LWFG), 108–128 (LACW…SLYM), 133–153 (VYGT…GYCA), 163–183 (LILL…IAIF), 209–229 (ITLY…GGYA), 234–254 (LVVA…GYKV), and 265–285 (FGFS…DFMV).

It belongs to the UbiA prenyltransferase family. Protoheme IX farnesyltransferase subfamily.

It localises to the cell inner membrane. It carries out the reaction heme b + (2E,6E)-farnesyl diphosphate + H2O = Fe(II)-heme o + diphosphate. Its pathway is porphyrin-containing compound metabolism; heme O biosynthesis; heme O from protoheme: step 1/1. Functionally, converts heme B (protoheme IX) to heme O by substitution of the vinyl group on carbon 2 of heme B porphyrin ring with a hydroxyethyl farnesyl side group. The protein is Protoheme IX farnesyltransferase of Citrobacter koseri (strain ATCC BAA-895 / CDC 4225-83 / SGSC4696).